The sequence spans 177 residues: ATP synthase subunit delta (177 aa).

It belongs to the ATPase delta chain family. In terms of assembly, F-type ATPases have 2 components, F(1) - the catalytic core - and F(0) - the membrane proton channel. F(1) has five subunits: alpha(3), beta(3), gamma(1), delta(1), epsilon(1). F(0) has three main subunits: a(1), b(2) and c(10-14). The alpha and beta chains form an alternating ring which encloses part of the gamma chain. F(1) is attached to F(0) by a central stalk formed by the gamma and epsilon chains, while a peripheral stalk is formed by the delta and b chains.

Its subcellular location is the cell membrane. Its function is as follows. F(1)F(0) ATP synthase produces ATP from ADP in the presence of a proton or sodium gradient. F-type ATPases consist of two structural domains, F(1) containing the extramembraneous catalytic core and F(0) containing the membrane proton channel, linked together by a central stalk and a peripheral stalk. During catalysis, ATP synthesis in the catalytic domain of F(1) is coupled via a rotary mechanism of the central stalk subunits to proton translocation. This protein is part of the stalk that links CF(0) to CF(1). It either transmits conformational changes from CF(0) to CF(1) or is implicated in proton conduction. This chain is ATP synthase subunit delta, found in Buchnera aphidicola subsp. Acyrthosiphon pisum (strain 5A).